Reading from the N-terminus, the 386-residue chain is Porin PorA (386 aa).

The signal sequence occupies residues 1–35 (MKRTLGHALIIIGAALIVIAVLLPTFLVPRLRVIP). Residues 53–63 (DSSQLGKNEPT) show a composition bias toward polar residues. The segment at 53-78 (DSSQLGKNEPTPNRKNDPRCKAETDE) is disordered. Residues 64–78 (PNRKNDPRCKAETDE) show a composition bias toward basic and acidic residues.

This sequence belongs to the PorA family.

The protein localises to the secreted. It is found in the cell wall. Its function is as follows. Forms water-filled channels that favor the permeation of cations. In Corynebacterium amycolatum, this protein is Porin PorA.